A 117-amino-acid polypeptide reads, in one-letter code: Small ribosomal subunit protein bS6 (117 aa).

This sequence belongs to the bacterial ribosomal protein bS6 family.

Its function is as follows. Binds together with bS18 to 16S ribosomal RNA. The polypeptide is Small ribosomal subunit protein bS6 (Porphyromonas gingivalis (strain ATCC BAA-308 / W83)).